Consider the following 624-residue polypeptide: Elongation factor 4 (624 aa).

A tr-type G domain is found at 17 to 203; that stretch reads ALIRNFCIIA…RVVRDVPAPV (187 aa). GTP-binding positions include 29–34 and 150–153; these read DHGKST and NKID.

Belongs to the TRAFAC class translation factor GTPase superfamily. Classic translation factor GTPase family. LepA subfamily.

The protein resides in the cell membrane. It carries out the reaction GTP + H2O = GDP + phosphate + H(+). In terms of biological role, required for accurate and efficient protein synthesis under certain stress conditions. May act as a fidelity factor of the translation reaction, by catalyzing a one-codon backward translocation of tRNAs on improperly translocated ribosomes. Back-translocation proceeds from a post-translocation (POST) complex to a pre-translocation (PRE) complex, thus giving elongation factor G a second chance to translocate the tRNAs correctly. Binds to ribosomes in a GTP-dependent manner. This Streptomyces griseus subsp. griseus (strain JCM 4626 / CBS 651.72 / NBRC 13350 / KCC S-0626 / ISP 5235) protein is Elongation factor 4.